A 267-amino-acid chain; its full sequence is MAGNFWQSSHSQQWILDKQDLLRERQHDLLSLNEDEYQKVFIFFANVIQVLGEQLKLRQQVIATATVYFKRFYARNSLKNIDPLLLAPTCILLASKVEEFGVISNSRLISICQSAIKTKFSYAYTQEFPYRTNHILECEFYLLENLDCCLIVYQPYRPLLQLVQDMGQEDQLLTLSWRIVNDSLRTDVCLLYPPYQIAIACLQIACVILQKDSTKQWFAELNVDLDKVQEIVRAIVNLYEMWKDWKEKDEIQMLLSKIPKPKPPPQR.

Residues isoleucine 48–isoleucine 151 enclose the Cyclin N-terminal domain.

Belongs to the cyclin family. Cyclin C subfamily. In terms of assembly, component of the Cdk8 module of the Mediator complex.

Its subcellular location is the nucleus. In terms of biological role, component of the Mediator complex, a coactivator involved in regulated gene transcription of nearly all RNA polymerase II-dependent genes. Mediator functions as a bridge to convey information from gene-specific regulatory proteins to the basal RNA polymerase II transcription machinery. Mediator is recruited to promoters by direct interactions with regulatory proteins and serves as a scaffold for the assembly of a functional preinitiation complex with RNA polymerase II and the general transcription factors. Binds to and activates cyclin-dependent kinase Cdk8 that phosphorylates the CTD (C-terminal domain) of the large subunit of RNA polymerase II (RNAp II), which may inhibit the formation of a transcription initiation complex. This chain is Cyclin-C (CycC), found in Drosophila pseudoobscura pseudoobscura (Fruit fly).